A 201-amino-acid chain; its full sequence is Ras-related protein Rab-1B (201 aa).

An N-acetylmethionine modification is found at M1. Positions 17, 18, 19, 20, 21, 22, 23, 33, 34, 35, 36, 39, and 40 each coordinate GTP. Mg(2+) is bound at residue S22. The Switch 1 motif lies at 30 to 45; it reads DDTYTESYISTIGVDF. 2 residues coordinate Mg(2+): T40 and D63. Residues 64 to 83 are switch 2 region; required for interaction with REP1/CHM; it reads TAGQERFRTITSSYYRGAHG. Residues 65–80 carry the Switch 2 motif; sequence AGQERFRTITSSYYRG. Residue G66 participates in GTP binding. S76 bears the (Microbial infection) O-(2-cholinephosphoryl)serine mark. At Y77 the chain carries (Microbial infection) O-AMP-tyrosine. N121, K122, D124, S151, A152, and K153 together coordinate GTP. Residues 174–201 are disordered; it reads GPGAASGGERPNLKIDSTPVKPAGGGCC. 2 S-geranylgeranyl cysteine lipidation sites follow: C200 and C201. C201 is modified (cysteine methyl ester).

Belongs to the small GTPase superfamily. Rab family. In terms of assembly, interacts with MICAL1 and MICAL2. Interacts (in GTP-bound form) with MICALCL, MICAL1 and MILCAL3. Interacts with GDI1; the interaction requires the GDP-bound state. Interacts with CHM/REP1; the interaction requires the GDP-bound form and is necessary for prenylation by GGTase II. Interacts with RabGAP TBC1D20. Interacts (in GDP-bound form) with lipid phosphatase MTMR6 (via GRAM domain); the interaction regulates MTMR6 recruitment to the endoplasmic reticulum-Golgi intermediate compartment. Interacts (in GDP-bound form) with lipid phosphatase MTMR7. (Microbial infection) Interacts with L.pneumophila AnkX. Interacts with L.pneumophila Lem3. Interacts with L.pneumophila SidD. Interacts with L.pneumophila DrrA. It depends on Mg(2+) as a cofactor. Post-translationally, prenylated; by GGTase II, only after interaction of the substrate with Rab escort protein 1 (REP1). In terms of processing, (Microbial infection) AMPylation at Tyr-77 by L.pneumophila DrrA occurs in the switch 2 region and leads to moderate inactivation of the GTPase activity. It appears to prolong the lifetime of the GTP state of RAB1B by restricting access of GTPase effectors to switch 2 and blocking effector-stimulated GTP hydrolysis, thereby rendering RAB1B constitutively active. It is later de-AMPylated by L.pneumophila SidD, releasing RAB1B from bacterial phagosomes. (Microbial infection) Phosphocholinated at Ser-76 by L.pneumophila AnkX, leading to displace GDP dissociation inhibitors (GDI). Both GDP-bound and GTP-bound forms can be phosphocholinated. Dephosphocholinated by L.pneumophila Lem3, restoring accessibility to L.pneumophila GTPase effector LepB. Post-translationally, (Microbial infection) Glycosylated by S.typhimurium protein Ssek3: arginine GlcNAcylation prevents GTPase activity, thereby disrupting vesicular protein transport from the endoplasmic reticulum (ER) to the Golgi compartment.

It is found in the cytoplasm. The protein localises to the membrane. Its subcellular location is the preautophagosomal structure membrane. The protein resides in the perinuclear region. The catalysed reaction is GTP + H2O = GDP + phosphate + H(+). With respect to regulation, regulated by guanine nucleotide exchange factors (GEFs) which promote the exchange of bound GDP for free GTP. Regulated by GTPase activating proteins (GAPs) including TBC1D20 which increases the GTP hydrolysis activity. Inhibited by GDP dissociation inhibitors (GDIs). Its function is as follows. The small GTPases Rab are key regulators of intracellular membrane trafficking, from the formation of transport vesicles to their fusion with membranes. Rabs cycle between an inactive GDP-bound form and an active GTP-bound form that is able to recruit to membranes different set of downstream effectors directly responsible for vesicle formation, movement, tethering and fusion. Plays a role in the initial events of the autophagic vacuole development which take place at specialized regions of the endoplasmic reticulum. Regulates vesicular transport between the endoplasmic reticulum and successive Golgi compartments. Required to modulate the compacted morphology of the Golgi. Promotes the recruitment of lipid phosphatase MTMR6 to the endoplasmic reticulum-Golgi intermediate compartment. This chain is Ras-related protein Rab-1B, found in Homo sapiens (Human).